The chain runs to 594 residues: Probable Xaa-Pro aminopeptidase P (594 aa).

Mn(2+) contacts are provided by D391, D402, E500, and E514.

It belongs to the peptidase M24B family. It depends on Mn(2+) as a cofactor.

It carries out the reaction Release of any N-terminal amino acid, including proline, that is linked to proline, even from a dipeptide or tripeptide.. Its function is as follows. Catalyzes the removal of a penultimate prolyl residue from the N-termini of peptides. The chain is Probable Xaa-Pro aminopeptidase P (ampp) from Pyrenophora tritici-repentis (strain Pt-1C-BFP) (Wheat tan spot fungus).